The primary structure comprises 278 residues: Lectin 6 (278 aa).

The N-terminal stretch at 1-23 (MTLSSALIKIFITFLFLQNHVNS) is a signal peptide. Residues N116, N139, and N271 are each glycosylated (N-linked (GlcNAc...) asparagine).

This sequence belongs to the leguminous lectin family.

In terms of biological role, may be involved in arbuscular mycorrhizal (AM) symbiosis with AM fungi. This chain is Lectin 6, found in Medicago truncatula (Barrel medic).